Reading from the N-terminus, the 244-residue chain is 15,16-dihydrobiliverdin:ferredoxin oxidoreductase (244 aa).

The protein belongs to the HY2 family.

The catalysed reaction is 15,16-dihydrobiliverdin + oxidized 2[4Fe-4S]-[ferredoxin] = biliverdin IXalpha + reduced 2[4Fe-4S]-[ferredoxin] + 2 H(+). Catalyzes the two-electron reduction of biliverdin IX-alpha at the C15 methine bridge. This chain is 15,16-dihydrobiliverdin:ferredoxin oxidoreductase (pebA), found in Nostoc punctiforme (strain ATCC 29133 / PCC 73102).